Consider the following 180-residue polypeptide: CASP-like protein XL3 (180 aa).

The Cytoplasmic segment spans residues Met-1–Lys-7. Residues Ile-8–Gly-28 traverse the membrane as a helical segment. Residues Leu-29–Arg-49 are Extracellular-facing. Residues Ala-50–Cys-70 traverse the membrane as a helical segment. The Cytoplasmic segment spans residues Cys-71–Gln-98. Residues Ala-99–Leu-119 traverse the membrane as a helical segment. Over Thr-120 to Gln-140 the chain is Extracellular. A helical transmembrane segment spans residues Ile-141–Ile-161. Residues Ser-162 to Leu-180 are Cytoplasmic-facing.

The protein belongs to the Casparian strip membrane proteins (CASP) family. As to quaternary structure, homodimer and heterodimers.

It localises to the cell membrane. The sequence is that of CASP-like protein XL3 (XL3) from Gossypium hirsutum (Upland cotton).